The chain runs to 111 residues: COX assembly mitochondrial protein (111 aa).

Residues 39–82 (YKKCANFVQAMADCAKANGMKVFPTCDKQRDEMKSCLLFYQTDE) form the CHCH domain. 2 short sequence motifs (cx9C motif) span residues 42–52 (CANFVQAMADC) and 64–74 (CDKQRDEMKSC). Disulfide bonds link Cys-42–Cys-74 and Cys-52–Cys-64.

Belongs to the CMC family.

Its subcellular location is the mitochondrion inner membrane. Required for mitochondrial cytochrome c oxidase (COX) assembly and respiration. Binds copper. May be involved in copper trafficking and distribution to mitochondrial COX and SOD1. This chain is COX assembly mitochondrial protein (CMC1), found in Saccharomyces cerevisiae (strain YJM789) (Baker's yeast).